Here is a 108-residue protein sequence, read N- to C-terminus: Thiosulfate sulfurtransferase GlpE (108 aa).

The Rhodanese domain maps to lysine 17–glutamate 105. The active-site Cysteine persulfide intermediate is cysteine 65.

Belongs to the GlpE family.

Its subcellular location is the cytoplasm. It catalyses the reaction thiosulfate + hydrogen cyanide = thiocyanate + sulfite + 2 H(+). It carries out the reaction thiosulfate + [thioredoxin]-dithiol = [thioredoxin]-disulfide + hydrogen sulfide + sulfite + 2 H(+). Transferase that catalyzes the transfer of sulfur from thiosulfate to thiophilic acceptors such as cyanide or dithiols. May function in a CysM-independent thiosulfate assimilation pathway by catalyzing the conversion of thiosulfate to sulfite, which can then be used for L-cysteine biosynthesis. This is Thiosulfate sulfurtransferase GlpE from Serratia proteamaculans (strain 568).